Here is a 480-residue protein sequence, read N- to C-terminus: Cobyric acid synthase (480 aa).

The GATase cobBQ-type domain maps to 246–434 (KILIAVPILP…VHGLFSELAQ (189 aa)). The active-site Nucleophile is C328. The active site involves H426.

This sequence belongs to the CobB/CobQ family. CobQ subfamily.

It participates in cofactor biosynthesis; adenosylcobalamin biosynthesis. Functionally, catalyzes amidations at positions B, D, E, and G on adenosylcobyrinic A,C-diamide. NH(2) groups are provided by glutamine, and one molecule of ATP is hydrogenolyzed for each amidation. This Methylocella silvestris (strain DSM 15510 / CIP 108128 / LMG 27833 / NCIMB 13906 / BL2) protein is Cobyric acid synthase.